The primary structure comprises 485 residues: D-alanine--D-alanyl carrier protein ligase (485 aa).

144–145 (TS) contacts ATP. A D-alanine-binding site is contributed by Asp-189. Residue 284-289 (NTYGPT) coordinates ATP. Val-293 serves as a coordination point for D-alanine. ATP is bound by residues Asp-365 and Lys-473. Residue Lys-473 coordinates D-alanine.

Belongs to the ATP-dependent AMP-binding enzyme family. DltA subfamily.

The protein resides in the cytoplasm. It carries out the reaction holo-[D-alanyl-carrier protein] + D-alanine + ATP = D-alanyl-[D-alanyl-carrier protein] + AMP + diphosphate. It functions in the pathway cell wall biogenesis; lipoteichoic acid biosynthesis. Functionally, catalyzes the first step in the D-alanylation of lipoteichoic acid (LTA), the activation of D-alanine and its transfer onto the D-alanyl carrier protein (Dcp) DltC. In an ATP-dependent two-step reaction, forms a high energy D-alanyl-AMP intermediate, followed by transfer of the D-alanyl residue as a thiol ester to the phosphopantheinyl prosthetic group of the Dcp. D-alanylation of LTA plays an important role in modulating the properties of the cell wall in Gram-positive bacteria, influencing the net charge of the cell wall. The polypeptide is D-alanine--D-alanyl carrier protein ligase (Staphylococcus epidermidis (strain ATCC 35984 / DSM 28319 / BCRC 17069 / CCUG 31568 / BM 3577 / RP62A)).